The chain runs to 458 residues: Transcription termination factor Rho (458 aa).

The tract at residues 1–23 (MNTTNKESTAELNNTESNNNYNN) is disordered. Residues 10 to 23 (AELNNTESNNNYNN) show a composition bias toward low complexity. Positions 78-153 (LIVGEGVLEV…LKVNRVNFED (76 aa)) constitute a Rho RNA-BD domain. Residues 201–206 (GKGQRA), 213–218 (RTGKTV), and Arg244 contribute to the ATP site.

Belongs to the Rho family. In terms of assembly, homohexamer. The homohexamer assembles into an open ring structure.

In terms of biological role, facilitates transcription termination by a mechanism that involves Rho binding to the nascent RNA, activation of Rho's RNA-dependent ATPase activity, and release of the mRNA from the DNA template. This Rickettsia conorii (strain ATCC VR-613 / Malish 7) protein is Transcription termination factor Rho.